Reading from the N-terminus, the 1581-residue chain is Rho guanine nucleotide exchange factor 5 (1581 aa).

Disordered regions lie at residues 25-54 (EGIM…TDGH), 159-274 (VSKE…EQKQ), 316-643 (LRDS…RDGI), 659-700 (SEEF…PPTV), 741-810 (HSHP…PEFY), and 829-1051 (VPII…GSSD). Positions 41-54 (QEDRDPSYKWTDGH) are enriched in basic and acidic residues. A compositionally biased stretch (polar residues) spans 204–221 (KQLQLEATQENQGQEGFL). Acidic residues predominate over residues 228–241 (GLEEQEGQEVEIQE). Composition is skewed to basic and acidic residues over residues 326-336 (QESREVEERRV) and 345-380 (RLVE…DSGD). At Ser-446 the chain carries Phosphoserine. Positions 474–492 (LDNRTHNSQQEEFRLRKGI) are enriched in basic and acidic residues. Residues 496 to 507 (SASTSVAPSGTR) are compositionally biased toward polar residues. The segment covering 515 to 531 (PNVFSSTATLSPVSSSV) has biased composition (low complexity). Composition is skewed to polar residues over residues 569-595 (TSDT…NSFP), 603-613 (TPDSLGMSLSF), 662-685 (FTSN…QNSA), 748-760 (TLSS…SKGS), and 779-791 (TPES…TSIP). A compositionally biased stretch (pro residues) spans 829-843 (VPIIDPSSEPPPLPP). Composition is skewed to polar residues over residues 867–881 (PNNQ…SVGR), 889–905 (GRST…NNEV), and 912–925 (SNMT…SPTT). 2 positions are modified to phosphoserine: Ser-953 and Ser-969. Residues 975-986 (KNSEKPLHHQLE) are compositionally biased toward basic and acidic residues. 2 positions are modified to phosphoserine: Ser-1029 and Ser-1110. One can recognise a DH domain in the interval 1158–1342 (KLQEAKFELI…EKLIRDCNSN (185 aa)). Residues 1375-1488 (LVKSGELTAL…SALAMPREEL (114 aa)) enclose the PH domain. The 62-residue stretch at 1494–1555 (YDSPQVQCLR…PVQQVEFISN (62 aa)) folds into the SH3 domain.

Interacts with SRC. Forms a ternary complex with SRC and the PI3K 85 kDa subunit. Interacts with and is activated by the heterodimer formed by GNB1 and GNG2. Interacts with ODAM (via C-terminus). Interacts with RHOA. Activation of SRC induces tyrosine phosphorylation of ARHGEF5.

It localises to the nucleus. The protein resides in the cytoplasm. The protein localises to the cell projection. Its subcellular location is the podosome. Its function is as follows. Guanine nucleotide exchange factor which activates Rho GTPases. Strongly activates RHOA. Also strongly activates RHOB, weakly activates RHOC and RHOG and shows no effect on RHOD, RHOV, RHOQ or RAC1. Involved in regulation of cell shape and actin cytoskeletal organization. Plays a role in actin organization by generating a loss of actin stress fibers and the formation of membrane ruffles and filopodia. Required for SRC-induced podosome formation. Involved in positive regulation of immature dendritic cell migration. The chain is Rho guanine nucleotide exchange factor 5 from Mus musculus (Mouse).